The sequence spans 202 residues: Glycerol-3-phosphate acyltransferase (202 aa).

4 helical membrane-spanning segments follow: residues 1 to 21, 84 to 104, 116 to 136, and 143 to 163; these read MTLIALILPAYLLGSISFGVL, AVAAAALGVFLGHLFPVFLHF, ILLGFNPWMGLLAATIWLAVA, and SLAAIVAASLAPFYALFFLGF.

This sequence belongs to the PlsY family. In terms of assembly, probably interacts with PlsX.

It is found in the cell inner membrane. The catalysed reaction is an acyl phosphate + sn-glycerol 3-phosphate = a 1-acyl-sn-glycero-3-phosphate + phosphate. It participates in lipid metabolism; phospholipid metabolism. Its function is as follows. Catalyzes the transfer of an acyl group from acyl-phosphate (acyl-PO(4)) to glycerol-3-phosphate (G3P) to form lysophosphatidic acid (LPA). This enzyme utilizes acyl-phosphate as fatty acyl donor, but not acyl-CoA or acyl-ACP. The sequence is that of Glycerol-3-phosphate acyltransferase from Nitrosospira multiformis (strain ATCC 25196 / NCIMB 11849 / C 71).